We begin with the raw amino-acid sequence, 146 residues long: Putative pre-16S rRNA nuclease (146 aa).

Belongs to the YqgF nuclease family.

The protein localises to the cytoplasm. Functionally, could be a nuclease involved in processing of the 5'-end of pre-16S rRNA. The chain is Putative pre-16S rRNA nuclease from Paraburkholderia phytofirmans (strain DSM 17436 / LMG 22146 / PsJN) (Burkholderia phytofirmans).